The following is a 616-amino-acid chain: Chaperone protein HtpG (616 aa).

Positions 1 to 333 (MKKQFDTEVN…CQDLPLNVSR (333 aa)) are a; substrate-binding. A b region spans residues 334 to 542 (EILQQNKILS…SNDPTYQMQK (209 aa)). The tract at residues 543–616 (IMLSMGQEVK…INEFLEKELL (74 aa)) is c.

Belongs to the heat shock protein 90 family. Homodimer.

It localises to the cytoplasm. Functionally, molecular chaperone. Has ATPase activity. The protein is Chaperone protein HtpG of Borrelia garinii subsp. bavariensis (strain ATCC BAA-2496 / DSM 23469 / PBi) (Borreliella bavariensis).